A 231-amino-acid chain; its full sequence is uncharacterized protein (231 aa).

A signal peptide spans 1-17; it reads MFGKILTTSLLIAMTFA. Residues 197 to 231 form a disordered region; the sequence is KARKQQKNEGDDEETEDEQKIGSAIDGWVERQAKL.

This is an uncharacterized protein from Caenorhabditis elegans.